The following is a 213-amino-acid chain: Gas vesicle protein F1 (213 aa).

The protein belongs to the gas vesicle GvpF/GvpL family. As to quaternary structure, binds GvpA1 in early growth stages; is the only one of GvpF1 to GvpM1 that interacts with GvpA1 in H.volcanii experiments. GvpF to GvpM interact with each other in vitro, and may form multi-subunit complex(es). Interacts with GvpC1 and GvpO1.

Its subcellular location is the gas vesicle. The protein localises to the cytoplasm. Functionally, might be involved in preventing aggregation of GvpA1. Proteins GvpF to GvpM might be involved in nucleating gas vesicle formation. A minor component of the gas vesicle, also found in soluble extracts. Gas vesicles are hollow, gas filled proteinaceous nanostructures found in several microbial planktonic microorganisms. They allow positioning of halobacteria at the optimal depth for growth in the poorly aerated, shallow brine pools of their habitat. Its function is as follows. Expression of a 9.5 kb p-vac DNA fragment containing 2 divergently transcribed regions (gvpD-gvpE-gvpF-gvpG-gvpH-gvpI-gvpJ-gvpK-gvpL-gvpM and gvpA-gvpC-gvpN-gvpO) allows H.volcanii to produce gas vesicles. A minimal gas vesicle can be made in H.volcanii by gvpA1-gvpO1 plus gvpF1-gvpG1-gvpJ1-gvpK1-gvpL1-gvpM1; lack of enough GvpJ1 prevents formation. The same region restores gas vesicle production in H.halobium without the p-vac locus. This chain is Gas vesicle protein F1 (gvpF11), found in Halobacterium salinarum (strain ATCC 700922 / JCM 11081 / NRC-1) (Halobacterium halobium).